Here is a 180-residue protein sequence, read N- to C-terminus: Der GTPase-activating protein YihI (180 aa).

Disordered stretches follow at residues 1-87 and 142-180; these read MSRK…MTKQ and GLLE…DYKG. The segment covering 23-32 has biased composition (basic and acidic residues); it reads NRTESDVEGR. Over residues 33 to 43 the composition is skewed to basic residues; sequence LRKRAKKRKGL. Positions 51–68 are enriched in basic and acidic residues; the sequence is EVNEQKKQSSEQNRDPRL. The span at 165-180 shows a compositional bias: acidic residues; that stretch reads DLLADFDDINFDDYKG.

Belongs to the YihI family. Interacts with Der.

In terms of biological role, a GTPase-activating protein (GAP) that modifies Der/EngA GTPase function. May play a role in ribosome biogenesis. This is Der GTPase-activating protein YihI from Vibrio parahaemolyticus serotype O3:K6 (strain RIMD 2210633).